Reading from the N-terminus, the 316-residue chain is Ribosomal RNA small subunit methyltransferase H (316 aa).

Residues 35-37 (AGH), D55, F84, D105, and Q112 contribute to the S-adenosyl-L-methionine site.

This sequence belongs to the methyltransferase superfamily. RsmH family.

It is found in the cytoplasm. It catalyses the reaction cytidine(1402) in 16S rRNA + S-adenosyl-L-methionine = N(4)-methylcytidine(1402) in 16S rRNA + S-adenosyl-L-homocysteine + H(+). Specifically methylates the N4 position of cytidine in position 1402 (C1402) of 16S rRNA. The protein is Ribosomal RNA small subunit methyltransferase H of Streptococcus suis (strain 05ZYH33).